Consider the following 212-residue polypeptide: Thymidylate kinase (212 aa).

10–17 is a binding site for ATP; that stretch reads GPEGAGKT.

It belongs to the thymidylate kinase family.

The catalysed reaction is dTMP + ATP = dTDP + ADP. In terms of biological role, phosphorylation of dTMP to form dTDP in both de novo and salvage pathways of dTTP synthesis. The sequence is that of Thymidylate kinase from Bacillus velezensis (strain DSM 23117 / BGSC 10A6 / LMG 26770 / FZB42) (Bacillus amyloliquefaciens subsp. plantarum).